A 277-amino-acid chain; its full sequence is Glutamate racemase (277 aa).

Substrate contacts are provided by residues 9–10 (DS) and 41–42 (YG). Cys-73 acts as the Proton donor/acceptor in catalysis. A substrate-binding site is contributed by 74 to 75 (NT). The active-site Proton donor/acceptor is the Cys-183. Substrate is bound at residue 184 to 185 (TH).

It belongs to the aspartate/glutamate racemases family.

The enzyme catalyses L-glutamate = D-glutamate. It functions in the pathway cell wall biogenesis; peptidoglycan biosynthesis. In terms of biological role, provides the (R)-glutamate required for cell wall biosynthesis. The polypeptide is Glutamate racemase (Shewanella denitrificans (strain OS217 / ATCC BAA-1090 / DSM 15013)).